The sequence spans 335 residues: Aspartate carbamoyltransferase catalytic subunit (335 aa).

2 residues coordinate carbamoyl phosphate: R54 and T55. Residue K82 participates in L-aspartate binding. Residues R104, H134, and Q137 each coordinate carbamoyl phosphate. Residues R177 and R232 each coordinate L-aspartate. Carbamoyl phosphate is bound by residues G277 and P278.

The protein belongs to the aspartate/ornithine carbamoyltransferase superfamily. ATCase family. Heterododecamer (2C3:3R2) of six catalytic PyrB chains organized as two trimers (C3), and six regulatory PyrI chains organized as three dimers (R2).

It carries out the reaction carbamoyl phosphate + L-aspartate = N-carbamoyl-L-aspartate + phosphate + H(+). Its pathway is pyrimidine metabolism; UMP biosynthesis via de novo pathway; (S)-dihydroorotate from bicarbonate: step 2/3. Catalyzes the condensation of carbamoyl phosphate and aspartate to form carbamoyl aspartate and inorganic phosphate, the committed step in the de novo pyrimidine nucleotide biosynthesis pathway. This chain is Aspartate carbamoyltransferase catalytic subunit, found in Paenarthrobacter aurescens (strain TC1).